The primary structure comprises 249 residues: 1-(5-phosphoribosyl)-5-[(5-phosphoribosylamino)methylideneamino] imidazole-4-carboxamide isomerase (249 aa).

The active-site Proton acceptor is aspartate 8. The Proton donor role is filled by aspartate 131.

This sequence belongs to the HisA/HisF family.

It is found in the cytoplasm. It catalyses the reaction 1-(5-phospho-beta-D-ribosyl)-5-[(5-phospho-beta-D-ribosylamino)methylideneamino]imidazole-4-carboxamide = 5-[(5-phospho-1-deoxy-D-ribulos-1-ylimino)methylamino]-1-(5-phospho-beta-D-ribosyl)imidazole-4-carboxamide. It functions in the pathway amino-acid biosynthesis; L-histidine biosynthesis; L-histidine from 5-phospho-alpha-D-ribose 1-diphosphate: step 4/9. The polypeptide is 1-(5-phosphoribosyl)-5-[(5-phosphoribosylamino)methylideneamino] imidazole-4-carboxamide isomerase (Nitrosomonas europaea (strain ATCC 19718 / CIP 103999 / KCTC 2705 / NBRC 14298)).